The following is a 192-amino-acid chain: Segregation and condensation protein B (192 aa).

Belongs to the ScpB family. Homodimer. Homodimerization may be required to stabilize the binding of ScpA to the Smc head domains. Component of a cohesin-like complex composed of ScpA, ScpB and the Smc homodimer, in which ScpA and ScpB bind to the head domain of Smc. The presence of the three proteins is required for the association of the complex with DNA.

The protein resides in the cytoplasm. Its function is as follows. Participates in chromosomal partition during cell division. May act via the formation of a condensin-like complex containing Smc and ScpA that pull DNA away from mid-cell into both cell halves. This is Segregation and condensation protein B from Oceanobacillus iheyensis (strain DSM 14371 / CIP 107618 / JCM 11309 / KCTC 3954 / HTE831).